The chain runs to 124 residues: Ribonuclease VapC32 (124 aa).

The PINc domain occupies 2–112; sequence ILVDTSVWIE…TRDKRLKAAC (111 aa). D5 and D86 together coordinate Mg(2+).

Belongs to the PINc/VapC protein family. Requires Mg(2+) as cofactor.

In terms of biological role, toxic component of a type II toxin-antitoxin (TA) system. An RNase. Its toxic effect is neutralized by coexpression with cognate antitoxin VapB32. This is Ribonuclease VapC32 from Mycobacterium tuberculosis (strain CDC 1551 / Oshkosh).